We begin with the raw amino-acid sequence, 119 residues long: Chorion class CA protein ERA.1 (119 aa).

A signal peptide spans 1-21 (MSTFAVLLLCVQACLIQNVYS). The tract at residues 22 to 55 (QCLGRVGPGGPPLGPYGGPLGGPGYGPVGYGGCG) is left arm. The central domain stretch occupies residues 56-103 (GYGGSGIGNVAVAGELPVAGSTGVMGQVPVIGAVEFAGPACAVGSVSI). The interval 104-119 (SGACGPTCGCGGSPYY) is right arm.

It belongs to the chorion protein family.

In terms of biological role, this protein is one of many from the eggshell of the silk moth. This is Chorion class CA protein ERA.1 (ERA.1) from Bombyx mori (Silk moth).